Here is a 499-residue protein sequence, read N- to C-terminus: Terminase, large subunit (499 aa).

Positions M1–F58 are interaction with the terminase small subunit. The segment at M1–G286 is ATPase activity. A Walker A motif motif is present at residues A60–S67. The Walker B motif signature appears at G199–E204. Residue E204 is the For ATPase activity of the active site. Residues D312–K482 form a nuclease activity region. Residues D321 and D459 each contribute to the Mg(2+) site.

This sequence belongs to the Lederbergvirus large terminase family. Interacts with the terminase small subunit; the active complex is composed of dimer of terminase large subunits and a nonamer ring of terminase small subunits. Interacts with the portal protein; this interaction allows the packaging of viral DNA. It depends on Mg(2+) as a cofactor.

Functionally, the terminase large subunit acts as an ATP driven molecular motor necessary for viral DNA translocation into empty capsids and as an endonuclease that cuts the viral genome to initiate and to end a packaging reaction. The terminase lies at a unique vertex of the procapsid and is composed of two subunits, a small terminase subunit involved in viral DNA recognition (packaging 'pac' sequence), and a large terminase subunit possessing endonucleolytic and ATPase activities. Both terminase subunits heterooligomerize and are docked on the portal protein to form the packaging machine. Once the capsid is packaged with the DNA (headful packaging), the terminase cleaves the viral genome concatemer and is substituted by the tail. The sequence is that of Terminase, large subunit (2) from Salmonella phage P22 (Bacteriophage P22).